The following is a 276-amino-acid chain: 3-methyl-2-oxobutanoate hydroxymethyltransferase (276 aa).

Mg(2+) contacts are provided by Asp45 and Asp84. 3-methyl-2-oxobutanoate is bound by residues 45–46 (DS), Asp84, and Lys114. Glu116 serves as a coordination point for Mg(2+). Glu183 acts as the Proton acceptor in catalysis.

Belongs to the PanB family. Homodecamer; pentamer of dimers. Mg(2+) is required as a cofactor.

Its subcellular location is the cytoplasm. It catalyses the reaction 3-methyl-2-oxobutanoate + (6R)-5,10-methylene-5,6,7,8-tetrahydrofolate + H2O = 2-dehydropantoate + (6S)-5,6,7,8-tetrahydrofolate. The protein operates within cofactor biosynthesis; (R)-pantothenate biosynthesis; (R)-pantoate from 3-methyl-2-oxobutanoate: step 1/2. Catalyzes the reversible reaction in which hydroxymethyl group from 5,10-methylenetetrahydrofolate is transferred onto alpha-ketoisovalerate to form ketopantoate. The protein is 3-methyl-2-oxobutanoate hydroxymethyltransferase of Syntrophomonas wolfei subsp. wolfei (strain DSM 2245B / Goettingen).